Here is an 845-residue protein sequence, read N- to C-terminus: SLIT and NTRK-like protein 2 (845 aa).

The signal sequence occupies residues 1-21 (MLSGVWFLSVLTVAGILQTES). The Extracellular segment spans residues 22 to 621 (RKTAKDICKI…LHTEVPLSVL (600 aa)). Disulfide bonds link C29–C35 and C33–C46. 6 LRR repeats span residues 63–84 (RIYQ…EFVN), 87–108 (NAVT…AFSG), 111–132 (TLKR…TFLG), 135–156 (SLEY…AFSK), 159–180 (KLKV…VFRF), and 182–203 (LLTH…GVLE). N-linked (GlcNAc...) asparagine glycosylation is present at N84. Residues 167–215 (DNLLLSLPSNVFRFVLLTHLDLRGNRLKVMPFAGVLEHIGGIMEIQLEE) are required for interaction with PTPRD. In terms of domain architecture, LRRCT 1 spans 216–265 (NPWNCTCDLLPLKAWLDTITVFVGEIVCETPFRLHGKDVTQLTRQDLCPR). 2 cysteine pairs are disulfide-bonded: C220–C243 and C222–C263. Residues 263–321 (CPRKSASDSSQRGSHADTHVQRLSPTMNPALNPTRAPKASRPPKMRNRPTPRVTVSKDR) are disordered. A compositionally biased stretch (polar residues) spans 283-293 (QRLSPTMNPAL). The 43-residue stretch at 331–373 (QTKSPVPLTCPSSCVCTSQSSDNGLNVNCQERKFTNISDLQPK) folds into the LRRNT domain. 6 LRR repeats span residues 376–397 (SPKK…DLLE), 400–421 (SLDL…AFTN), 424–445 (SLRR…MFDG), 448–469 (SLQY…TFDA), 472–493 (NLQL…IFGG), and 495–516 (ALTR…GVLD). An N-linked (GlcNAc...) asparagine glycan is attached at N421. Positions 529–580 (NPWDCTCDIMGLKDWTEHANSPVIINEVTCESPAKHAGEILKFLGREAICPD) constitute an LRRCT 2 domain. Residues 622–642 (ILGLLVVFILSVCFGAGLFVF) traverse the membrane as a helical segment. Residues 643 to 845 (VLKRRKGVPS…LEKQTAISQL (203 aa)) lie on the Cytoplasmic side of the membrane. Y756 is subject to Phosphotyrosine.

The protein belongs to the SLITRK family. As to quaternary structure, interacts with PTPRD; this interaction is PTPRD splicing-dependent and may induce pre-synaptic differentiation. Interacts with NTRK2. As to expression, expressed predominantly in the cerebral cortex of the brain but also at low levels in the spinal cord and medulla. Also expressed in some astrocytic brain tumors such as astrocytomas, oligodendrogliomas, glioblastomas, gangliogliomas and primitive neuroectodermal tumors.

It is found in the membrane. It localises to the cell membrane. The protein resides in the cell projection. Its subcellular location is the dendrite. It is involved in synaptogenesis and promotes excitatory synapse differentiation. Suppresses neurite outgrowth. Involved in the negative regulation of NTRK2. The protein is SLIT and NTRK-like protein 2 (SLITRK2) of Homo sapiens (Human).